Here is a 345-residue protein sequence, read N- to C-terminus: S-adenosylmethionine:tRNA ribosyltransferase-isomerase (345 aa).

It belongs to the QueA family. As to quaternary structure, monomer.

The protein localises to the cytoplasm. It catalyses the reaction 7-aminomethyl-7-carbaguanosine(34) in tRNA + S-adenosyl-L-methionine = epoxyqueuosine(34) in tRNA + adenine + L-methionine + 2 H(+). It participates in tRNA modification; tRNA-queuosine biosynthesis. In terms of biological role, transfers and isomerizes the ribose moiety from AdoMet to the 7-aminomethyl group of 7-deazaguanine (preQ1-tRNA) to give epoxyqueuosine (oQ-tRNA). This is S-adenosylmethionine:tRNA ribosyltransferase-isomerase from Anaeromyxobacter dehalogenans (strain 2CP-1 / ATCC BAA-258).